The sequence spans 493 residues: Probable polyol transporter 6 (493 aa).

The next 12 membrane-spanning stretches (helical) occupy residues 25–45 (SIVS…MVFI), 54–74 (VQIE…SLLA), 85–105 (YTIV…GWGP), 116–136 (TAGL…AEIA), 142–162 (GLLA…GYIV), 177–197 (LMLG…LKMP), 275–295 (VLLT…EAVL), 313–333 (LFLV…TATL), 343–363 (LLLT…FGLT), 372–392 (LAWA…FFSI), 414–434 (GASL…MSFL), and 444–464 (GAFF…FFLL).

Belongs to the major facilitator superfamily. Sugar transporter (TC 2.A.1.1) family.

It localises to the membrane. Functionally, plasma membrane sugar-proton symporter. This is Probable polyol transporter 6 (PLT6) from Arabidopsis thaliana (Mouse-ear cress).